A 726-amino-acid chain; its full sequence is PTS system glucose-specific EIICBA component (726 aa).

A PTS EIIC type-1 domain is found at 1–453 (MMKDTFKNVL…FNYATPGRNG (453 aa)). 9 helical membrane passes run 18 to 38 (FGKALMVVIAVMPAAGLMISI), 62 to 82 (IGWGVIGNLHILFALAIGGSW), 90 to 110 (AFAAGLAFILINRITGTIFGV), 139 to 159 (VLEAPALNMGVFVGIISGFVG), 184 to 204 (FVPFVVILRSAIAAILLAAFW), 311 to 331 (FKVGQMIGSFGILMGVIVAIY), 344 to 364 (GMMIATALATFLTGVTEPIEY), 365 to 385 (MFMFIATPMYLVYSLVQGAAF), and 419 to 439 (IVNFVWVTVLFAVIMYFIANF). The PTS EIIB type-1 domain occupies 473–555 (GSQAVNIINL…QDILDSGEII (83 aa)). The active-site Phosphocysteine intermediate; for EIIB activity is C495. The PTS EIIA type-1 domain occupies 596 to 700 (DPVFAQKMMG…ETSTVVVFTN (105 aa)). H648 functions as the Tele-phosphohistidine intermediate; for EIIA activity in the catalytic mechanism.

The protein localises to the cell membrane. It carries out the reaction N(pros)-phospho-L-histidyl-[protein] + D-glucose(out) = D-glucose 6-phosphate(in) + L-histidyl-[protein]. Functionally, the phosphoenolpyruvate-dependent sugar phosphotransferase system (sugar PTS), a major carbohydrate active transport system, catalyzes the phosphorylation of incoming sugar substrates concomitantly with their translocation across the cell membrane. This system is involved in glucose transport. The chain is PTS system glucose-specific EIICBA component (exp5) from Streptococcus pneumoniae serotype 4 (strain ATCC BAA-334 / TIGR4).